A 541-amino-acid polypeptide reads, in one-letter code: Molybdate transporter 1 (541 aa).

5 helical membrane passes run 24–44 (LLLS…PLLL), 58–78 (LLFS…PLPV), 98–118 (TVAA…TGGL), 137–157 (AGMS…GWLW), and 168–188 (GLGE…GLVV). Residues 193 to 213 (QQQQQQQSGEKPQERRKKRSK) form a disordered region. 2 consecutive transmembrane segments (helical) span residues 214–234 (MPVQ…FAVV) and 287–307 (MAIA…SALA). Residues 317 to 366 (PQLYADDESSDSPLSPSPSASSSSLSSAPPQTPSAETPKPLSSPTSAEEG) are disordered. Low complexity predominate over residues 327-351 (DSPLSPSPSASSSSLSSAPPQTPSA). Transmembrane regions (helical) follow at residues 413 to 433 (IILL…PGLL) and 435 to 455 (LLGK…GVEL). Positions 510–541 (TEKGRGGEQGLLGEEEEEEEQGRVDEESPLLR) are disordered.

The protein belongs to the SLC26A/SulP transporter (TC 2.A.53) family.

The protein localises to the vacuole membrane. In terms of biological role, exports stored molybdate from the vacuole into the cytosol, making it available for molybdate cofactor (Moco) biosynthesis. Plays a role in molybdate homeostasis as high cytosolic levels of molybdate are toxic to cells. Not required for molybdate import into cells. The protein is Molybdate transporter 1 of Neurospora crassa (strain ATCC 24698 / 74-OR23-1A / CBS 708.71 / DSM 1257 / FGSC 987).